The following is a 342-amino-acid chain: Glycerol-1-phosphate dehydrogenase [NAD(P)+] (342 aa).

NAD(+)-binding positions include 84–88 (GRPID) and 106–109 (TSAS). Aspartate 111 contributes to the substrate binding site. Serine 115 contacts NAD(+). Aspartate 160 provides a ligand contact to substrate. The Zn(2+) site is built by aspartate 160 and histidine 241. Residue histidine 245 coordinates substrate. Histidine 260 serves as a coordination point for Zn(2+).

The protein belongs to the glycerol-1-phosphate dehydrogenase family. As to quaternary structure, homodimer. The cofactor is Zn(2+).

It is found in the cytoplasm. It catalyses the reaction sn-glycerol 1-phosphate + NAD(+) = dihydroxyacetone phosphate + NADH + H(+). It carries out the reaction sn-glycerol 1-phosphate + NADP(+) = dihydroxyacetone phosphate + NADPH + H(+). It participates in membrane lipid metabolism; glycerophospholipid metabolism. Functionally, catalyzes the NAD(P)H-dependent reduction of dihydroxyacetonephosphate (DHAP or glycerone phosphate) to glycerol 1-phosphate (G1P). The G1P thus generated is used as the glycerophosphate backbone of phospholipids in the cellular membranes of Archaea. In Pyrobaculum islandicum (strain DSM 4184 / JCM 9189 / GEO3), this protein is Glycerol-1-phosphate dehydrogenase [NAD(P)+].